We begin with the raw amino-acid sequence, 309 residues long: Mitochondrial glycine transporter (309 aa).

3 Solcar repeats span residues 2–94 (SNVG…LRAL), 124–207 (LTSQ…IKHE), and 219–304 (QATL…GLML). Transmembrane regions (helical) follow at residues 8 to 33 (LLSGGLSGLATTVCLQPFDLLKTRLQ), 69 to 95 (GTTPSLVRNVPGVALYMTSLTQLRALM), 130 to 155 (LIAGATTRVGVGFLLNPFSVLKARFE), 182 to 205 (GFLASSLRDAPYAGLFVVFYEGIK), 223 to 249 (IHGLSAASAGAIATMATHPFDVIKTKI), and 279 to 297 (GASLRMSRKVLSSAIGWAV).

Belongs to the mitochondrial carrier (TC 2.A.29) family. SLC25A38 subfamily.

The protein localises to the mitochondrion inner membrane. The catalysed reaction is glycine(in) = glycine(out). Mitochondrial glycine transporter that imports glycine into the mitochondrial matrix. Plays an important role in providing glycine for the first enzymatic step in heme biosynthesis, the condensation of glycine with succinyl-CoA to produce 5-aminolevulinate (ALA) in the mitochondrial matrix. This chain is Mitochondrial glycine transporter, found in Laccaria bicolor (strain S238N-H82 / ATCC MYA-4686) (Bicoloured deceiver).